The sequence spans 307 residues: MRKIIVGSRRSKLALTQSQQFIDQLKRKHPNLEIEIKEIVTKGDQIVNVQLSKVGGKGLFVKEIEQALYDGTIDFAIHSLKDVPSVLPEGLTLGCIPVREDARDAYIAKHHIPLHELKPGSIVGTSSLRRGAQLLDQYPHLEIKWIRGNIDTRLAKLRDEDYDAIILAAAGLNRMGWDKSIVTEYLNPELMLPAIGQGALGIECRSDDAEVLALLKSVHDEETELCTEAERTFLRLMDGSCQVPIAGHATMVGESIEFTGLIMSPDGKEKYKVTHSGGNPIEIGTQVAKAMEQNGAKAIIETLNQDI.

Residue Cys-241 is modified to S-(dipyrrolylmethanemethyl)cysteine.

It belongs to the HMBS family. Monomer. Dipyrromethane is required as a cofactor.

The catalysed reaction is 4 porphobilinogen + H2O = hydroxymethylbilane + 4 NH4(+). The protein operates within porphyrin-containing compound metabolism; protoporphyrin-IX biosynthesis; coproporphyrinogen-III from 5-aminolevulinate: step 2/4. Its function is as follows. Tetrapolymerization of the monopyrrole PBG into the hydroxymethylbilane pre-uroporphyrinogen in several discrete steps. The sequence is that of Porphobilinogen deaminase from Macrococcus caseolyticus (strain JCSC5402) (Macrococcoides caseolyticum).